The chain runs to 187 residues: Peptidyl-tRNA hydrolase (187 aa).

Tyr15 contacts tRNA. His20 serves as the catalytic Proton acceptor. Residues Phe64, Asn66, and Asn112 each coordinate tRNA.

The protein belongs to the PTH family. In terms of assembly, monomer.

It localises to the cytoplasm. The catalysed reaction is an N-acyl-L-alpha-aminoacyl-tRNA + H2O = an N-acyl-L-amino acid + a tRNA + H(+). Hydrolyzes ribosome-free peptidyl-tRNAs (with 1 or more amino acids incorporated), which drop off the ribosome during protein synthesis, or as a result of ribosome stalling. In terms of biological role, catalyzes the release of premature peptidyl moieties from peptidyl-tRNA molecules trapped in stalled 50S ribosomal subunits, and thus maintains levels of free tRNAs and 50S ribosomes. In Bacteroides fragilis (strain ATCC 25285 / DSM 2151 / CCUG 4856 / JCM 11019 / LMG 10263 / NCTC 9343 / Onslow / VPI 2553 / EN-2), this protein is Peptidyl-tRNA hydrolase.